We begin with the raw amino-acid sequence, 452 residues long: Phosphoglucosamine mutase (452 aa).

Residue Ser-108 is the Phosphoserine intermediate of the active site. 4 residues coordinate Mg(2+): Ser-108, Asp-247, Asp-249, and Asp-251. The residue at position 108 (Ser-108) is a Phosphoserine.

Belongs to the phosphohexose mutase family. Mg(2+) serves as cofactor. Activated by phosphorylation.

It catalyses the reaction alpha-D-glucosamine 1-phosphate = D-glucosamine 6-phosphate. Its function is as follows. Catalyzes the conversion of glucosamine-6-phosphate to glucosamine-1-phosphate. The sequence is that of Phosphoglucosamine mutase from Paraburkholderia xenovorans (strain LB400).